Here is a 319-residue protein sequence, read N- to C-terminus: Zinc metalloproteinase/disintegrin (319 aa).

Positions 1–28 (EDEAPKMCGVTQNWESYEPIKKASQSNL) are excised as a propeptide. Residues 34–230 (RYIELVIVAD…QKPQCILNKP (197 aa)) enclose the Peptidase M12B domain. Positions 37 and 121 each coordinate Ca(2+). Intrachain disulfides connect C145/C225, C185/C209, and C187/C192. H170 serves as a coordination point for Zn(2+). E171 is a catalytic residue. Zn(2+)-binding residues include H174 and H180. C225 and N228 together coordinate Ca(2+). A propeptide spanning residues 231-246 (LRTDTVSTPVSGNELL) is cleaved from the precursor. The Disintegrin domain occupies 238-319 (TPVSGNELLE…AGCPRNPFHA (82 aa)). 6 disulfides stabilise this stretch: C252/C267, C254/C262, C261/C284, C275/C281, C280/C305, and C293/C312. A Cell attachment site motif is present at residues 297–299 (RGD).

Belongs to the venom metalloproteinase (M12B) family. P-II subfamily. P-IIa sub-subfamily. In terms of assembly, monomer. The cofactor is Zn(2+). In terms of tissue distribution, expressed by the venom gland.

The protein resides in the secreted. Its activity is regulated as follows. Excess of calcium ions significantly suppress the autoproteolysis of the enzyme. Metalloproteinase that impairs hemostasis in the envenomed animal. Shows autoproteolysis dependent on pH and temperature. Does not show hemorrhagic activity. Functionally, inhibits platelet aggregation induced by ADP (IC(50) is 200 nM), collagen (IC(50) is 500 nM), thrombin and epinephrin (IC(50) is 300 nM). Does not inhibit aggregation induced by ristocetin. Its function is as follows. Inhibits platelet aggregation induced by ADP (IC(50) is 100 nM), collagen (IC(50) is 500 nM), thrombin and epinephrin (IC(50) is 300 nM). Does not inhibit aggregation induced by ristocetin. Significantly inhibits angiogenesis both in vivo and in vitro. This Gloydius brevicauda (Korean slamosa snake) protein is Zinc metalloproteinase/disintegrin.